The sequence spans 130 residues: Histone H2B.1 (130 aa).

The span at 1 to 19 (MAPKAEKKPASKAPAEKKP) shows a compositional bias: basic and acidic residues. A disordered region spans residues 1–39 (MAPKAEKKPASKAPAEKKPAAKKTASATGTKKRSKTRKE). Lysine 7 and lysine 8 each carry N6-acetyllysine; alternate. Glycyl lysine isopeptide (Lys-Gly) (interchain with G-Cter in SUMO); alternate cross-links involve residues lysine 7 and lysine 8. Serine 11 carries the post-translational modification Phosphoserine. At lysine 12 the chain carries N6-acetyllysine. At lysine 17 the chain carries N6-acetyllysine; alternate. Lysine 17 participates in a covalent cross-link: Glycyl lysine isopeptide (Lys-Gly) (interchain with G-Cter in SUMO); alternate. Residue lysine 18 forms a Glycyl lysine isopeptide (Lys-Gly) (interchain with G-Cter in SUMO) linkage. Residue lysine 124 forms a Glycyl lysine isopeptide (Lys-Gly) (interchain with G-Cter in ubiquitin) linkage.

This sequence belongs to the histone H2B family. In terms of assembly, the nucleosome is a histone octamer containing two molecules each of H2A, H2B, H3 and H4 assembled in one H3-H4 heterotetramer and two H2A-H2B heterodimers. The octamer wraps approximately 147 bp of DNA. In terms of processing, monoubiquitinated by the UBC2-BRE1 complex to form H2BK123ub1. H2BK123ub1 gives a specific tag for epigenetic transcriptional activation and is also prerequisite for H3K4me and H3K79me formation. H2BK123ub1 also modulates the formation of double-strand breaks during meiosis and is a prerequisite for DNA-damage checkpoint activation. Post-translationally, phosphorylated by STE20 to form H2BS10ph during progression through meiotic prophase. May be correlated with chromosome condensation. Acetylated by GCN5 to form H2BK11ac and H2BK16ac. H2BK16ac can also be formed by ESA1. Acetylation of N-terminal lysines and particularly formation of H2BK11acK16ac has a positive effect on transcription. In terms of processing, sumoylation to form H2BK6su or H2BK7su, and probably also H2BK16su or H2BK17su, occurs preferentially near the telomeres and represses gene transcription.

The protein localises to the nucleus. Its subcellular location is the chromosome. Functionally, core component of nucleosome. Nucleosomes wrap and compact DNA into chromatin, limiting DNA accessibility to the cellular machineries which require DNA as a template. Histones thereby play a central role in transcription regulation, DNA repair, DNA replication and chromosomal stability. DNA accessibility is regulated via a complex set of post-translational modifications of histones, also called histone code, and nucleosome remodeling. The protein is Histone H2B.1 (HTB1) of Debaryomyces hansenii (strain ATCC 36239 / CBS 767 / BCRC 21394 / JCM 1990 / NBRC 0083 / IGC 2968) (Yeast).